We begin with the raw amino-acid sequence, 177 residues long: Small ribosomal subunit protein uS5 (177 aa).

Residues 14–77 enclose the S5 DRBM domain; the sequence is LQEKLITVNR…EKARHNMIDI (64 aa).

This sequence belongs to the universal ribosomal protein uS5 family. Part of the 30S ribosomal subunit. Contacts proteins S4 and S8.

Its function is as follows. With S4 and S12 plays an important role in translational accuracy. Functionally, located at the back of the 30S subunit body where it stabilizes the conformation of the head with respect to the body. The protein is Small ribosomal subunit protein uS5 of Blochmanniella floridana.